Here is a 1412-residue protein sequence, read N- to C-terminus: DNA-directed RNA polymerase subunit beta' (1412 aa).

Residues aspartate 543, aspartate 545, and aspartate 547 each coordinate Mg(2+). Positions 1017, 1092, 1099, and 1102 each coordinate Zn(2+).

Belongs to the RNA polymerase beta' chain family. In terms of assembly, the RNAP catalytic core consists of 2 alpha, 1 beta, 1 beta' and 1 omega subunit. When a sigma factor is associated with the core the holoenzyme is formed, which can initiate transcription. Mg(2+) serves as cofactor. Zn(2+) is required as a cofactor.

It catalyses the reaction RNA(n) + a ribonucleoside 5'-triphosphate = RNA(n+1) + diphosphate. DNA-dependent RNA polymerase catalyzes the transcription of DNA into RNA using the four ribonucleoside triphosphates as substrates. This Mesomycoplasma hyopneumoniae (strain 7448) (Mycoplasma hyopneumoniae) protein is DNA-directed RNA polymerase subunit beta'.